Consider the following 463-residue polypeptide: 4-hydroxybenzoate polyprenyltransferase, mitochondrial (463 aa).

2 disordered regions span residues 28-48 and 133-152; these read NNNT…STFN and LLDD…NNKP. Positions 137-150 are enriched in low complexity; that stretch reads NNSNSNNNNNSNNN. 7 helical membrane-spanning segments follow: residues 181–201, 206–226, 257–277, 305–325, 330–350, 375–395, and 431–451; these read IGVW…APAG, LKTM…GCVI, LIFL…SLNY, FVLG…IAGS, IVAP…TIYA, IILS…GIAA, and FISN…SKLL.

The protein belongs to the UbiA prenyltransferase family. It depends on Mg(2+) as a cofactor.

The protein localises to the mitochondrion inner membrane. It catalyses the reaction an all-trans-polyprenyl diphosphate + 4-hydroxybenzoate = a 4-hydroxy-3-(all-trans-polyprenyl)benzoate + diphosphate. Its pathway is cofactor biosynthesis; ubiquinone biosynthesis. Its function is as follows. Catalyzes the prenylation of para-hydroxybenzoate (PHB) with an all-trans polyprenyl group. Mediates the second step in the final reaction sequence of coenzyme Q (CoQ) biosynthesis, which is the condensation of the polyisoprenoid side chain with PHB. Functionally, catalyzes the prenylation of para-hydroxybenzoate (PHB) with an all-trans polyprenyl group. Mediates the second step in the final reaction sequence of coenzyme Q (CoQ) biosynthesis, which is the condensation of the polyisoprenoid side chain with PHB, generating the first membrane-bound Q intermediate. The chain is 4-hydroxybenzoate polyprenyltransferase, mitochondrial from Dictyostelium discoideum (Social amoeba).